A 562-amino-acid chain; its full sequence is NAD-dependent malic enzyme (562 aa).

Tyrosine 101 serves as the catalytic Proton donor. Arginine 154 contacts NAD(+). Lysine 172 (proton acceptor) is an active-site residue. A divalent metal cation contacts are provided by glutamate 243, aspartate 244, and aspartate 267. Aspartate 267 and asparagine 415 together coordinate NAD(+).

The protein belongs to the malic enzymes family. In terms of assembly, homotetramer. Mg(2+) serves as cofactor. Mn(2+) is required as a cofactor.

It carries out the reaction (S)-malate + NAD(+) = pyruvate + CO2 + NADH. The catalysed reaction is oxaloacetate + H(+) = pyruvate + CO2. The chain is NAD-dependent malic enzyme from Shewanella denitrificans (strain OS217 / ATCC BAA-1090 / DSM 15013).